Here is a 118-residue protein sequence, read N- to C-terminus: Large ribosomal subunit protein bL20 (118 aa).

The protein belongs to the bacterial ribosomal protein bL20 family.

Its function is as follows. Binds directly to 23S ribosomal RNA and is necessary for the in vitro assembly process of the 50S ribosomal subunit. It is not involved in the protein synthesizing functions of that subunit. The sequence is that of Large ribosomal subunit protein bL20 from Thermotoga petrophila (strain ATCC BAA-488 / DSM 13995 / JCM 10881 / RKU-1).